Here is a 395-residue protein sequence, read N- to C-terminus: Succinyl-diaminopimelate desuccinylase (395 aa).

His-74 serves as a coordination point for Zn(2+). Asp-76 is an active-site residue. Asp-107 provides a ligand contact to Zn(2+). Catalysis depends on Glu-141, which acts as the Proton acceptor. Residues Glu-142, Glu-170, and His-368 each coordinate Zn(2+).

This sequence belongs to the peptidase M20A family. DapE subfamily. Homodimer. It depends on Zn(2+) as a cofactor. Co(2+) serves as cofactor.

The catalysed reaction is N-succinyl-(2S,6S)-2,6-diaminopimelate + H2O = (2S,6S)-2,6-diaminopimelate + succinate. It participates in amino-acid biosynthesis; L-lysine biosynthesis via DAP pathway; LL-2,6-diaminopimelate from (S)-tetrahydrodipicolinate (succinylase route): step 3/3. In terms of biological role, catalyzes the hydrolysis of N-succinyl-L,L-diaminopimelic acid (SDAP), forming succinate and LL-2,6-diaminopimelate (DAP), an intermediate involved in the bacterial biosynthesis of lysine and meso-diaminopimelic acid, an essential component of bacterial cell walls. The protein is Succinyl-diaminopimelate desuccinylase of Brucella abortus (strain S19).